Reading from the N-terminus, the 400-residue chain is 2-octaprenylphenol hydroxylase (400 aa).

Residues 49–52 (RVSA) and 297–303 (LAGQGVN) contribute to the FAD site.

The protein belongs to the UbiH/COQ6 family. Homotetramer. Component of the Ubi complex metabolon, which regroups five ubiquinone biosynthesis proteins (UbiE, UbiF, UbiG, UbiH and UbiI) and two accessory factors (UbiK and the lipid-binding protein UbiJ). Requires FAD as cofactor.

The protein resides in the cytoplasm. It catalyses the reaction 2-all-trans-octaprenylphenol + NADPH + O2 + H(+) = 3-(all-trans-octaprenyl)benzene-1,2-diol + NADP(+) + H2O. The enzyme catalyses a 2-(all-trans-polyprenyl)phenol + NADPH + O2 + H(+) = a 3-(all-trans-polyprenyl)benzene-1,2-diol + NADP(+) + H2O. It participates in cofactor biosynthesis; ubiquinone biosynthesis. In terms of biological role, FAD-dependent monooxygenase required for the aerobic hydroxylation of 2-octaprenylphenol to 2-octaprenyl-6-hydroxy-phenol, the first hydroxylation step in coenzyme Q (ubiquinone) biosynthesis. This chain is 2-octaprenylphenol hydroxylase, found in Escherichia coli (strain K12).